Here is a 327-residue protein sequence, read N- to C-terminus: Probable cell division protein WhiA (327 aa).

The H-T-H motif DNA-binding region spans 275–308 (SLEELGRLADPPMTKDAVAGRIRRLLSMADRKAK). The disordered stretch occupies residues 304-327 (DRKAKQDGIPDTESAVTPDLLEDA).

This sequence belongs to the WhiA family.

Functionally, involved in cell division and chromosome segregation. The chain is Probable cell division protein WhiA from Mycolicibacterium gilvum (strain PYR-GCK) (Mycobacterium gilvum (strain PYR-GCK)).